Consider the following 153-residue polypeptide: Putative pre-16S rRNA nuclease (153 aa).

This sequence belongs to the YqgF nuclease family.

It is found in the cytoplasm. Its function is as follows. Could be a nuclease involved in processing of the 5'-end of pre-16S rRNA. The polypeptide is Putative pre-16S rRNA nuclease (Prochlorococcus marinus (strain AS9601)).